Consider the following 269-residue polypeptide: Formamidopyrimidine-DNA glycosylase (269 aa).

Pro2 functions as the Schiff-base intermediate with DNA in the catalytic mechanism. Glu3 acts as the Proton donor in catalysis. Catalysis depends on Lys57, which acts as the Proton donor; for beta-elimination activity. DNA contacts are provided by His90, Arg109, and Lys150. Residues 235–269 (QVYGRKGEPCRVCGTPIVASKHAQRATFYCRQCQK) form an FPG-type zinc finger. Residue Arg259 is the Proton donor; for delta-elimination activity of the active site.

Belongs to the FPG family. As to quaternary structure, monomer. It depends on Zn(2+) as a cofactor.

The enzyme catalyses Hydrolysis of DNA containing ring-opened 7-methylguanine residues, releasing 2,6-diamino-4-hydroxy-5-(N-methyl)formamidopyrimidine.. It catalyses the reaction 2'-deoxyribonucleotide-(2'-deoxyribose 5'-phosphate)-2'-deoxyribonucleotide-DNA = a 3'-end 2'-deoxyribonucleotide-(2,3-dehydro-2,3-deoxyribose 5'-phosphate)-DNA + a 5'-end 5'-phospho-2'-deoxyribonucleoside-DNA + H(+). Its function is as follows. Involved in base excision repair of DNA damaged by oxidation or by mutagenic agents. Acts as a DNA glycosylase that recognizes and removes damaged bases. Has a preference for oxidized purines, such as 7,8-dihydro-8-oxoguanine (8-oxoG). Has AP (apurinic/apyrimidinic) lyase activity and introduces nicks in the DNA strand. Cleaves the DNA backbone by beta-delta elimination to generate a single-strand break at the site of the removed base with both 3'- and 5'-phosphates. In Enterobacter sp. (strain 638), this protein is Formamidopyrimidine-DNA glycosylase.